The primary structure comprises 726 residues: Beta-glucosidase cel3A (726 aa).

Positions 1–20 (MASRLVAGLQVLALAGTATA) are cleaved as a signal peptide. N-linked (GlcNAc...) asparagine glycosylation is found at asparagine 223 and asparagine 592.

Belongs to the glycosyl hydrolase 3 family.

It localises to the secreted. The enzyme catalyses Hydrolysis of terminal, non-reducing beta-D-glucosyl residues with release of beta-D-glucose.. It functions in the pathway glycan metabolism; cellulose degradation. Beta-glucosidases are one of a number of cellulolytic enzymes involved in the degradation of cellulosic biomass. Catalyzes the last step releasing glucose from the inhibitory cellobiose. Has a broad substrate specificity but preferentially hydrolyzes highly polymerized 1,3- and 1,4-beta-glucans. The protein is Beta-glucosidase cel3A of Pyricularia oryzae (strain 70-15 / ATCC MYA-4617 / FGSC 8958) (Rice blast fungus).